The chain runs to 170 residues: Adenine phosphoribosyltransferase (170 aa).

It belongs to the purine/pyrimidine phosphoribosyltransferase family. In terms of assembly, homodimer.

The protein resides in the cytoplasm. The enzyme catalyses AMP + diphosphate = 5-phospho-alpha-D-ribose 1-diphosphate + adenine. It participates in purine metabolism; AMP biosynthesis via salvage pathway; AMP from adenine: step 1/1. Functionally, catalyzes a salvage reaction resulting in the formation of AMP, that is energically less costly than de novo synthesis. This is Adenine phosphoribosyltransferase from Carboxydothermus hydrogenoformans (strain ATCC BAA-161 / DSM 6008 / Z-2901).